Reading from the N-terminus, the 287-residue chain is N-methyltransferase verN (287 aa).

It belongs to the methyltransferase superfamily. LaeA methyltransferase family.

It participates in mycotoxin biosynthesis. N-methyltransferase; part of the gene cluster that mediates the biosynthesis of 11'-deoxyverticillin A, one of the dimeric epipolythiodioxopiperazines (ETPs) from the verticillin family that act as mycotoxins. 11'-deoxyverticillin A is required for normal conidiation. The nonribosomal peptide synthetase verP is speculated to be responsible for condensation of amino acids to form the carbon skeleton of verticillin, whereas the cluster-specific tailoring enzymes are involved in further modifications leading to the production of 11'-deoxyverticillin A. In Clonostachys rogersoniana, this protein is N-methyltransferase verN.